The chain runs to 532 residues: tRNA-2-methylthio-N(6)-dimethylallyladenosine synthase (532 aa).

The segment at 1–21 (MTSTVAHGAGSAGPADDVEPM) is disordered. The 117-residue stretch at 24-140 (RTYQVRTYGC…LPALLDRARH (117 aa)) folds into the MTTase N-terminal domain. Residues Cys-33, Cys-69, Cys-103, Cys-177, Cys-181, and Cys-184 each contribute to the [4Fe-4S] cluster site. Positions 163 to 399 (RESAYAAWVS…VELQEQISLE (237 aa)) constitute a Radical SAM core domain. The TRAM domain maps to 402–470 (RAIVGQRVEL…PHHLIADGGI (69 aa)). The tract at residues 510 to 532 (TSCGSAGGCGSADGAGSSAGDPQ) is disordered. Residues 523-532 (GAGSSAGDPQ) are compositionally biased toward low complexity.

Belongs to the methylthiotransferase family. MiaB subfamily. As to quaternary structure, monomer. It depends on [4Fe-4S] cluster as a cofactor.

It localises to the cytoplasm. The catalysed reaction is N(6)-dimethylallyladenosine(37) in tRNA + (sulfur carrier)-SH + AH2 + 2 S-adenosyl-L-methionine = 2-methylsulfanyl-N(6)-dimethylallyladenosine(37) in tRNA + (sulfur carrier)-H + 5'-deoxyadenosine + L-methionine + A + S-adenosyl-L-homocysteine + 2 H(+). Functionally, catalyzes the methylthiolation of N6-(dimethylallyl)adenosine (i(6)A), leading to the formation of 2-methylthio-N6-(dimethylallyl)adenosine (ms(2)i(6)A) at position 37 in tRNAs that read codons beginning with uridine. The sequence is that of tRNA-2-methylthio-N(6)-dimethylallyladenosine synthase from Mycobacterium ulcerans (strain Agy99).